The primary structure comprises 118 residues: Non-specific lipid-transfer protein 2 (118 aa).

The first 25 residues, 1-25 (MARGMKLACVVLVICMVVIAPMAEG), serve as a signal peptide directing secretion. Disulfide bonds link cysteine 29–cysteine 76, cysteine 39–cysteine 53, cysteine 54–cysteine 99, and cysteine 74–cysteine 113.

The protein belongs to the plant LTP family.

Its function is as follows. Plant non-specific lipid-transfer proteins transfer phospholipids as well as galactolipids across membranes. May play a role in wax or cutin deposition in the cell walls of expanding epidermal cells and certain secretory tissues. Binds saturated fatty acids, jasmonic acid and, with highest efficiency, unsaturated fatty acids and lysolipids. The polypeptide is Non-specific lipid-transfer protein 2 (Lens culinaris (Lentil)).